The primary structure comprises 568 residues: Urease subunit alpha (568 aa).

One can recognise a Urease domain in the interval 130–568 (GGIDTHIHFI…LPMAQRYFLF (439 aa)). Ni(2+) contacts are provided by histidine 135, histidine 137, and lysine 218. The residue at position 218 (lysine 218) is an N6-carboxylysine. Histidine 220 is a binding site for substrate. Residues histidine 247 and histidine 273 each coordinate Ni(2+). Catalysis depends on histidine 321, which acts as the Proton donor. Aspartate 361 lines the Ni(2+) pocket.

The protein belongs to the metallo-dependent hydrolases superfamily. Urease alpha subunit family. Heterotrimer of UreA (gamma), UreB (beta) and UreC (alpha) subunits. Three heterotrimers associate to form the active enzyme. The cofactor is Ni cation. In terms of processing, carboxylation allows a single lysine to coordinate two nickel ions.

Its subcellular location is the cytoplasm. It catalyses the reaction urea + 2 H2O + H(+) = hydrogencarbonate + 2 NH4(+). It participates in nitrogen metabolism; urea degradation; CO(2) and NH(3) from urea (urease route): step 1/1. The polypeptide is Urease subunit alpha (Burkholderia pseudomallei (strain K96243)).